The primary structure comprises 76 residues: uncharacterized protein (76 aa).

This is an uncharacterized protein from Ornithodoros (relapsing fever ticks).